A 62-amino-acid chain; its full sequence is uncharacterized protein (62 aa).

Transmembrane regions (helical) follow at residues 7 to 27 (LLLL…VFIA) and 34 to 51 (IIAS…GFTL).

Its subcellular location is the cell membrane. This is an uncharacterized protein from Bacillus subtilis (strain 168).